The following is a 34-amino-acid chain: Photosystem II reaction center protein T (34 aa).

A helical transmembrane segment spans residues 3 to 23 (ALVYTFLLVGTLGIIFFAIFF).

Belongs to the PsbT family. PSII is composed of 1 copy each of membrane proteins PsbA, PsbB, PsbC, PsbD, PsbE, PsbF, PsbH, PsbI, PsbJ, PsbK, PsbL, PsbM, PsbT, PsbY, PsbZ, Psb30/Ycf12, at least 3 peripheral proteins of the oxygen-evolving complex and a large number of cofactors. It forms dimeric complexes.

It localises to the plastid. It is found in the chloroplast thylakoid membrane. Functionally, found at the monomer-monomer interface of the photosystem II (PS II) dimer, plays a role in assembly and dimerization of PSII. PSII is a light-driven water plastoquinone oxidoreductase, using light energy to abstract electrons from H(2)O, generating a proton gradient subsequently used for ATP formation. In Klebsormidium bilatum (Filamentous green alga), this protein is Photosystem II reaction center protein T.